A 354-amino-acid chain; its full sequence is MSLDKIMNEAISPWMKGDGPDSDIVLSSRIRLARNFKKYQFSTMQNEEEAKLIQELFKKEFINKTVEPFGEFELLKMNELTPLQRRVLVEKHLISPNLAGTEYGACLLSESEHISVMLNEEDHIRIQCLFSGLQLSEALQSANQIDNWIEKEVEYAFDESLGYITSCPTNVGTGLRASVMIHLPGLVLTKRISRIIQVIQKLGLVVRGIYGEGSEALGNIFQVSNQMTLGKSEEDIIADLKSVIQQIIQQEKMARELIVQNSSIELEDKVYRSYGILANSRLIQSAEAANCLSDLRLGIDLGYIKGISRNILTELMVLTQPGILQQYAGGPLGPEERDYRRATLIRERLRIEKN.

The region spanning 24-254 is the Phosphagen kinase C-terminal domain; that stretch reads IVLSSRIRLA…QQIIQQEKMA (231 aa). ATP is bound by residues 27-31, His-92, Arg-125, 176-180, and 207-212; these read SSRIR, RASVM, and RGIYGE. Positions 337 to 342 match the RDXXRA motif of the pArg binding pocket involved in allosteric regulation motif; sequence RDYRRA.

This sequence belongs to the ATP:guanido phosphotransferase family.

It carries out the reaction L-arginyl-[protein] + ATP = N(omega)-phospho-L-arginyl-[protein] + ADP + H(+). Appears to be allosterically activated by the binding of pArg-containing polypeptides to the pArg-binding pocket localized in the C-terminal domain of McsB. In terms of biological role, catalyzes the specific phosphorylation of arginine residues in a large number of proteins. Is part of the bacterial stress response system. Protein arginine phosphorylation has a physiologically important role and is involved in the regulation of many critical cellular processes, such as protein homeostasis, motility, competence, and stringent and stress responses, by regulating gene expression and protein activity. The protein is Protein-arginine kinase of Bacillus cereus (strain ATCC 10987 / NRS 248).